The sequence spans 306 residues: D-alanine--D-alanine ligase (306 aa).

In terms of domain architecture, ATP-grasp spans 101-300 (KVVMAAAGIP…FGELVTWMVE (200 aa)). Residue 128–182 (LPPPYVLKPNTGGSSVGVFIVKEDQPHPPQELFRADWTFGESLMAEPFIKGLELT) coordinates ATP. Mg(2+)-binding residues include D250, E267, and N269.

Belongs to the D-alanine--D-alanine ligase family. Mg(2+) is required as a cofactor. Mn(2+) serves as cofactor.

Its subcellular location is the cytoplasm. The catalysed reaction is 2 D-alanine + ATP = D-alanyl-D-alanine + ADP + phosphate + H(+). Its pathway is cell wall biogenesis; peptidoglycan biosynthesis. In terms of biological role, cell wall formation. This chain is D-alanine--D-alanine ligase, found in Azorhizobium caulinodans (strain ATCC 43989 / DSM 5975 / JCM 20966 / LMG 6465 / NBRC 14845 / NCIMB 13405 / ORS 571).